Here is a 264-residue protein sequence, read N- to C-terminus: Pimeloyl-[acyl-carrier protein] methyl ester esterase (264 aa).

Residues 23–244 (LVMLHGWGVN…MLAKASHAPF (222 aa)) form the AB hydrolase-1 domain. Substrate contacts are provided by residues Trp29, 87–88 (SL), and 150–154 (FLAIQ). The active-site Nucleophile is Ser87. Catalysis depends on residues Asp214 and His241. Residue His241 coordinates substrate.

It belongs to the AB hydrolase superfamily. Carboxylesterase BioH family. As to quaternary structure, monomer.

It is found in the cytoplasm. The catalysed reaction is 6-carboxyhexanoyl-[ACP] methyl ester + H2O = 6-carboxyhexanoyl-[ACP] + methanol + H(+). Its pathway is cofactor biosynthesis; biotin biosynthesis. Its function is as follows. The physiological role of BioH is to remove the methyl group introduced by BioC when the pimeloyl moiety is complete. It allows to synthesize pimeloyl-ACP via the fatty acid synthetic pathway through the hydrolysis of the ester bonds of pimeloyl-ACP esters. This Shewanella sp. (strain MR-7) protein is Pimeloyl-[acyl-carrier protein] methyl ester esterase.